The primary structure comprises 355 residues: MRDRFLRACRRQPVDRTPIWLMRQAGRYMPEYRAIRERYGFLQMVKTPEVAAEVTLQPVQAFGVDAAIIFADILPPLEGLGLQLTYEKGEGPVIHNPIRSPHDVSVLRSCDPRETVAYTLAALQLVKRELNGLPLIGFSGAPFTLASYAIEGGGSREYRLTKRFMYEQPAAWHDLMERLSRLVADYLIAQIEAGADAVQIFDSWAGALSPADYRAYVLRHTQALVQTIRARLGDVTPPIIYFGTDMAGLAGEVRQIGADVLGVDWRIDLDVAWAQYGFNHAVQGNLDPMTLFAPPSIIAARARDILERAGGRPGHIFNLGHGILTETPVDHVRYLVEFVQSYPLPATAPVLQEVV.

Substrate is bound by residues 23-27 (RQAGR), Asp72, Tyr148, Ser203, and His321.

This sequence belongs to the uroporphyrinogen decarboxylase family. In terms of assembly, homodimer.

It is found in the cytoplasm. The enzyme catalyses uroporphyrinogen III + 4 H(+) = coproporphyrinogen III + 4 CO2. It participates in porphyrin-containing compound metabolism; protoporphyrin-IX biosynthesis; coproporphyrinogen-III from 5-aminolevulinate: step 4/4. In terms of biological role, catalyzes the decarboxylation of four acetate groups of uroporphyrinogen-III to yield coproporphyrinogen-III. This chain is Uroporphyrinogen decarboxylase, found in Chloroflexus aurantiacus (strain ATCC 29366 / DSM 635 / J-10-fl).